The chain runs to 364 residues: MANKTVLFHKHLESNAKMVDFHGWDMPLNYGSQIEEHHAVRQDAGMFDVSHMTVVDVTGQDARDFLRKLLANDVAKLTVPGKALYGGMLDDNAGVIDDLITYYLSDTHYRVVVNSATREKDLAWIAKQSAPFSVTITERPELAMIAVQGPNAKAKAATVFTPEQNSAVEGMKPFFGLQSGSLFIATTGYTGEAGYEIIVPEQDAEDLWQALLNTGVKPCGLGARDTLRLEAGMNLYGLDMDESINPLAANMGWTIAWEPSDRDFIGRAALTELKAQGTEKLVGLVMEEKGVLRHDMPVFFTDSDGVEQQGYITSGTFSPTLGYSIAMARVPAGIGAIAEVEMRKKRVAVKVIAPSFVRNGKQAF.

This sequence belongs to the GcvT family. In terms of assembly, the glycine cleavage system is composed of four proteins: P, T, L and H.

The enzyme catalyses N(6)-[(R)-S(8)-aminomethyldihydrolipoyl]-L-lysyl-[protein] + (6S)-5,6,7,8-tetrahydrofolate = N(6)-[(R)-dihydrolipoyl]-L-lysyl-[protein] + (6R)-5,10-methylene-5,6,7,8-tetrahydrofolate + NH4(+). In terms of biological role, the glycine cleavage system catalyzes the degradation of glycine. The polypeptide is Aminomethyltransferase (Shewanella denitrificans (strain OS217 / ATCC BAA-1090 / DSM 15013)).